A 527-amino-acid chain; its full sequence is FAD-dependent monooxygenase CTB5 (527 aa).

Residues 78–255 enclose the FAD-binding PCMH-type domain; the sequence is SDLHPSCIAL…TAVTLKTFGQ (178 aa).

The protein belongs to the oxygen-dependent FAD-linked oxidoreductase family.

The protein operates within mycotoxin biosynthesis. Its function is as follows. FAD-dependent monooxygenase; part of the gene cluster that mediates the biosynthesis of cercosporin, a light-activated, non-host-selective toxin. The perylenequinone chromophore of cercosporin absorbs light energy to attain an electronically-activated triplet state and produces active oxygen species such as the hydroxyl radical, superoxide, hydrogen peroxide or singlet oxygen upon reaction with oxygen molecules. These reactive oxygen species cause damage to various cellular components including lipids, proteins and nucleic acids. The first step of cercosporin biosynthesis is performed by the polyketide synthase CTB1 which catalyzes the formation of nor-toralactone. The starter unit acyltransferase (SAT) domain of CTB1 initiates polyketide extension by the selective utilization of acetyl-CoA, which is elongated to the heptaketide in the beta-ketoacyl synthase (KS) domain by successive condensations with six malonyl units introduced by the malonyl acyltransferase (MAT) domain. The product template (PT) domain catalyzes C4-C9 and C2-C11 aldol cyclizations and dehydrations to a trihydroxynaphthalene, which is thought to be delivered to the thioesterase (TE) domain for product release. The bifunctional enzyme CTB3 then methylates nor-toralactone to toralactone before conducting an unusual oxidative aromatic ring opening. The O-methyltransferase CTB2 further methylates the nascent OH-6 of the CBT3 product, blocking further oxidation at this site before the reductase CTB6 reduces the 2-oxopropyl ketone at position C7, giving naphthalene. The FAD-dependent monooxygenase CTB5 in concert with the multicopper oxidase CTB12 are responsible for homodimerization of naphthalene with CTB7 installing the dioxepine moiety, finally producing cercosporin. The fasciclin domain-containing protein CTB11 might act with CTB5 and CTB12 whereas the roles of CTB9 and CTB10 have still to be elucidated. The chain is FAD-dependent monooxygenase CTB5 from Cercospora beticola (Sugarbeet leaf spot fungus).